Here is a 361-residue protein sequence, read N- to C-terminus: Peptide chain release factor 1 (361 aa).

N5-methylglutamine is present on Gln-237. Basic and acidic residues predominate over residues 287-297; the sequence is KQQKEQSDTRK. Positions 287-307 are disordered; it reads KQQKEQSDTRKNLVGSGDRSE.

This sequence belongs to the prokaryotic/mitochondrial release factor family. In terms of processing, methylated by PrmC. Methylation increases the termination efficiency of RF1.

The protein localises to the cytoplasm. Functionally, peptide chain release factor 1 directs the termination of translation in response to the peptide chain termination codons UAG and UAA. The sequence is that of Peptide chain release factor 1 from Francisella philomiragia subsp. philomiragia (strain ATCC 25017 / CCUG 19701 / FSC 153 / O#319-036).